We begin with the raw amino-acid sequence, 602 residues long: Cholinesterase (602 aa).

The N-terminal stretch at 1–28 is a signal peptide; that stretch reads MQSKGTIISIQFLLRFLLLWVLIGKSHT. Asn-85 carries an N-linked (GlcNAc...) asparagine glycan. The cysteines at positions 93 and 120 are disulfide-linked. Residue Asn-134 is glycosylated (N-linked (GlcNAc...) asparagine). 144–145 is a binding site for substrate; the sequence is GG. The active-site Acyl-ester intermediate is Ser-226. Ser-226 carries the post-translational modification Phosphoserine. N-linked (GlcNAc...) asparagine glycosylation is found at Asn-269 and Asn-284. Cys-280 and Cys-291 are joined by a disulfide. Glu-353 (charge relay system) is an active-site residue. Asn-369 carries an N-linked (GlcNAc...) asparagine glycan. A disulfide bond links Cys-428 and Cys-547. His-466 serves as the catalytic Charge relay system. 4 N-linked (GlcNAc...) asparagine glycosylation sites follow: Asn-483, Asn-509, Asn-513, and Asn-514.

Belongs to the type-B carboxylesterase/lipase family. In terms of assembly, homotetramer; disulfide-linked. Dimer of dimers.

It localises to the secreted. It carries out the reaction an acylcholine + H2O = a carboxylate + choline + H(+). In terms of biological role, esterase with broad substrate specificity. Contributes to the inactivation of the neurotransmitter acetylcholine. Can degrade neurotoxic organophosphate esters. The protein is Cholinesterase (BCHE) of Felis catus (Cat).